The primary structure comprises 433 residues: Probable M18 family aminopeptidase 2 (433 aa).

Zn(2+) is bound by residues histidine 84, histidine 161, and histidine 409.

Belongs to the peptidase M18 family. Zn(2+) is required as a cofactor.

This is Probable M18 family aminopeptidase 2 from Clostridium novyi (strain NT).